Reading from the N-terminus, the 260-residue chain is MQDDLKNAPIGFFDSGLGGLSVLRKALEMMPNENYIYYGDSKHAPYGEKTPQEIRSLSFNAIEFLIKKGAKAIVIACNTATSAAAHDLREYYKDIPIIGIEPALKPAIKLHETGSVIVMATKATLNQEKFKNLMDKYGEHREVIPLPCPGLVEFIEAGDLEGEDVKNFLREKLNPYMDREISSIVLGCTHYPFVKDVIQDIVGEKVDIIDGSSGTVRELKRRLEENNMESESKKKGNLDIFNSLEDKKILELSKKLIEIK.

Residues 14–15 (DS) and 46–47 (YG) contribute to the substrate site. Catalysis depends on Cys77, which acts as the Proton donor/acceptor. 78–79 (NT) is a binding site for substrate. Cys188 serves as the catalytic Proton donor/acceptor. 189–190 (TH) lines the substrate pocket.

Belongs to the aspartate/glutamate racemases family.

The catalysed reaction is L-glutamate = D-glutamate. It functions in the pathway cell wall biogenesis; peptidoglycan biosynthesis. Provides the (R)-glutamate required for cell wall biosynthesis. This Clostridium perfringens (strain ATCC 13124 / DSM 756 / JCM 1290 / NCIMB 6125 / NCTC 8237 / Type A) protein is Glutamate racemase.